The primary structure comprises 344 residues: Adenosine kinase (344 aa).

Residue Asp-298 is part of the active site.

It belongs to the carbohydrate kinase PfkB family. Requires Mg(2+) as cofactor.

The catalysed reaction is adenosine + ATP = AMP + ADP + H(+). It participates in purine metabolism; AMP biosynthesis via salvage pathway; AMP from adenosine: step 1/1. The protein is Adenosine kinase (ADK) of Schizophyllum commune (Split gill fungus).